The chain runs to 238 residues: Citrate-binding protein (238 aa).

The N-terminal stretch at 1–31 (MKMKRSPYCFCCSFALLLLVSFLKDRHFCSA) is a signal peptide. The propeptide at 225-238 (LEGCNNNHGTWLVQ) is removed in mature form.

The protein resides in the vacuole. Its function is as follows. May be a subunit of a vacuolar malate and citrate transporter. The polypeptide is Citrate-binding protein (CBP) (Hevea brasiliensis (Para rubber tree)).